The chain runs to 741 residues: D-(-)-3-hydroxybutyrate oligomer hydrolase (741 aa).

The N-terminal stretch at 1–23 is a signal peptide; the sequence is MKTIQGKSPGRWYSRGMLLAAMA. A disordered region spans residues 45 to 68; it reads NGNAGGNGNNNGNNNGNTVSNTKP. Ser338 serves as the catalytic Charge relay system.

Belongs to the D-(-)-3-hydroxybutyrate oligomer hydrolase family.

Its subcellular location is the secreted. The enzyme catalyses (3R)-hydroxybutanoate dimer + H2O = 2 (R)-3-hydroxybutanoate + H(+). Its pathway is lipid metabolism; butanoate metabolism. Functionally, participates in the degradation of poly-3-hydroxybutyrate (PHB). It works downstream of poly(3-hydroxybutyrate) depolymerase, hydrolyzing D(-)-3-hydroxybutyrate oligomers of various length (3HB-oligomers) into 3HB-monomers. This chain is D-(-)-3-hydroxybutyrate oligomer hydrolase, found in Ralstonia pickettii (Burkholderia pickettii).